The following is a 150-amino-acid chain: D-aminoacyl-tRNA deacylase (150 aa).

A Gly-cisPro motif, important for rejection of L-amino acids motif is present at residues 138–139 (GP).

It belongs to the DTD family. As to quaternary structure, homodimer.

The protein localises to the cytoplasm. The catalysed reaction is glycyl-tRNA(Ala) + H2O = tRNA(Ala) + glycine + H(+). It catalyses the reaction a D-aminoacyl-tRNA + H2O = a tRNA + a D-alpha-amino acid + H(+). In terms of biological role, an aminoacyl-tRNA editing enzyme that deacylates mischarged D-aminoacyl-tRNAs. Also deacylates mischarged glycyl-tRNA(Ala), protecting cells against glycine mischarging by AlaRS. Acts via tRNA-based rather than protein-based catalysis; rejects L-amino acids rather than detecting D-amino acids in the active site. By recycling D-aminoacyl-tRNA to D-amino acids and free tRNA molecules, this enzyme counteracts the toxicity associated with the formation of D-aminoacyl-tRNA entities in vivo and helps enforce protein L-homochirality. This is D-aminoacyl-tRNA deacylase from Opitutus terrae (strain DSM 11246 / JCM 15787 / PB90-1).